We begin with the raw amino-acid sequence, 143 residues long: Ayaconin (143 aa).

Positions 1 to 22 are cleaved as a signal peptide; that stretch reads MSFLFFLVVLISIGLWVGPCVA.

In terms of assembly, interacts with human F12 (inactive). In terms of tissue distribution, salivary gland.

The protein resides in the secreted. In terms of biological role, inhibits the intrinsic blood coagulation pathway in the host by blocking activation of host coagulation factor XII (F12). The sequence is that of Ayaconin from Lutzomyia ayacuchensis (Sand fly).